The sequence spans 480 residues: Cysteine--tRNA ligase (480 aa).

Cys27 contributes to the Zn(2+) binding site. The short motif at 29 to 39 (PTVYNYAHIGN) is the 'HIGH' region element. Residues Cys221, His246, and Glu250 each coordinate Zn(2+). The 'KMSKS' region motif lies at 278–282 (KMSKS). An ATP-binding site is contributed by Lys281.

It belongs to the class-I aminoacyl-tRNA synthetase family. Monomer. Zn(2+) is required as a cofactor.

It localises to the cytoplasm. The enzyme catalyses tRNA(Cys) + L-cysteine + ATP = L-cysteinyl-tRNA(Cys) + AMP + diphosphate. This is Cysteine--tRNA ligase from Borreliella burgdorferi (strain ZS7) (Borrelia burgdorferi).